Here is a 309-residue protein sequence, read N- to C-terminus: Taste receptor type 2 member 46 (309 aa).

Residue M1 is a topological domain, extracellular. The helical transmembrane segment at 2-22 (ITFLPIIFSILIVVTFVIGNF) threads the bilayer. The Cytoplasmic segment spans residues 23–46 (ANGFIALANSIEWFKRQKISFADQ). Residues 47-67 (ILTALAVSRVGLLWVLLLNWY) form a helical membrane-spanning segment. The Extracellular portion of the chain corresponds to 68-86 (ATELNPAFYSIEVRITAYN). The chain crosses the membrane as a helical span at residues 87-107 (VWAVISHFSNWLATSLSIFYL). Topologically, residues 108–126 (LKIANFSNLIFLRLKRRVK) are cytoplasmic. The chain crosses the membrane as a helical span at residues 127–147 (SVVLVILLGPLLFLVCHLFVI). Residues 148–178 (NMNQIIWTKEYEGNMTWKIKLRSAMYLSDTT) are Extracellular-facing. N161 carries an N-linked (GlcNAc...) asparagine glycan. Residues 179-199 (VTILANLVPFTLTLISFLLLI) traverse the membrane as a helical segment. Residues 200-229 (CSLCKHLKKMQLHGKGSQDPSMKVHIKALQ) lie on the Cytoplasmic side of the membrane. A helical transmembrane segment spans residues 230–250 (TVTSFLLLCAIYFLSVIMSVW). Topologically, residues 251 to 259 (SFESLENKP) are extracellular. The chain crosses the membrane as a helical span at residues 260–280 (VFMFCEAITFSYPSTHPFILI). Topologically, residues 281 to 309 (WGNKKLKQTFLSVLWHVRYWVKGEKPSSS) are cytoplasmic.

This sequence belongs to the G-protein coupled receptor T2R family.

The protein resides in the membrane. The protein localises to the cell projection. Its subcellular location is the cilium membrane. Its function is as follows. Receptor that may play a role in the perception of bitterness and is gustducin-linked. May play a role in sensing the chemical composition of the gastrointestinal content. The activity of this receptor may stimulate alpha gustducin, mediate PLC-beta-2 activation and lead to the gating of TRPM5. In airway epithelial cells, binding of bitter compounds increases the intracellular calcium ion concentration and stimulates ciliary beat frequency. The sequence is that of Taste receptor type 2 member 46 (TAS2R46) from Gorilla gorilla gorilla (Western lowland gorilla).